Reading from the N-terminus, the 1927-residue chain is MELSWHVVFIALLSFSCWGSDWESDRNFISTAGPLTNDLLHNLSGLLGDQSSNFVAGDKDMYVCHQPLPTFLPEYFSSLHASQITHYKVFLSWAQLLPAGSTQNPDEKTVQCYRRLLKALKTARLQPMVILHHQTLPASTLRRTEAFADLFADYATFAFHSFGDLVGIWFTFSDLEEVIKELPHQESRASQLQTLSDAHRKAYEIYHESYAFQGGKLSVVLRAEDIPELLLEPPISALAQDTVDFLSLDLSYECQNEASLRQKLSKLQTIEPKVKVFIFNLKLPDCPSTMKNPASLLFSLFEAINKDQVLTIGFDINEFLSCSSSSKKSMSCSLTGSLALQPDQQQDHETTDSSPASAYQRIWEAFANQSRAERDAFLQDTFPEGFLWGASTGAFNVEGGWAEGGRGVSIWDPRRPLNTTEGQATLEVASDSYHKVASDVALLCGLRAQVYKFSISWSRIFPMGHGSSPSLPGVAYYNKLIDRLQDAGIEPMATLFHWDLPQALQDHGGWQNESVVDAFLDYAAFCFSTFGDRVKLWVTFHEPWVMSYAGYGTGQHPPGISDPGVASFKVAHLVLKAHARTWHHYNSHHRPQQQGHVGIVLNSDWAEPLSPERPEDLRASERFLHFMLGWFAHPVFVDGDYPATLRTQIQQMNRQCSHPVAQLPEFTEAEKQLLKGSADFLGLSHYTSRLISNAPQNTCIPSYDTIGGFSQHVNHVWPQTSSSWIRVVPWGIRRLLQFVSLEYTRGKVPIYLAGNGMPIGESENLFDDSLRVDYFNQYINEVLKAIKEDSVDVRSYIARSLIDGFEGPSGYSQRFGLHHVNFSDSSKSRTPRKSAYFFTSIIEKNGFLTKGAKRLLPPNTVNLPSKVRAFTFPSEVPSKAKVVWEKFSSQPKFERDLFYHGTFRDDFLWGVSSSAYQIEGAWDADGKGPSIWDNFTHTPGSNVKDNATGDIACDSYHQLDADLNMLRALKVKAYRFSISWSRIFPTGRNSSINSHGVDYYNRLINGLVASNIFPMVTLFHWDLPQALQDIGGWENPALIDLFDSYADFCFQTFGDRVKFWMTFNEPMYLAWLGYGSGEFPPGVKDPGWAPYRIAHAVIKAHARVYHTYDEKYRQEQKGVISLSLSTHWAEPKSPGVPRDVEAADRMLQFSLGWFAHPIFRNGDYPDTMKWKVGNRSELQHLATSRLPSFTEEEKRFIRATADVFCLNTYYSRIVQHKTPRLNPPSYEDDQEMAEEEDPSWPSTAMNRAAPWGTRRLLNWIKEEYGDIPIYITENGVGLTNPNTEDTDRIFYHKTYINEALKAYRLDGIDLRGYVAWSLMDNFEWLNGYTVKFGLYHVDFNNTNRPRTARASARYYTEVITNNGMPLAREDEFLYGRFPEGFIWSAASAAYQIEGAWRADGKGLSIWDTFSHTPLRVENDAIGDVACDSYHKIAEDLVTLQNLGVSHYRFSISWSRILPDGTTRYINEAGLNYYVRLIDTLLAASIQPQVTIYHWDLPQTLQDVGGWENETIVQRFKEYADVLFQRLGDKVKFWITLNEPFVIAYQGYGYGTAAPGVSNRPGTAPYIVGHNLIKAHAEAWHLYNDVYRASQGGVISITISSDWAEPRDPSNQEDVEAARRYVQFMGGWFAHPIFKNGDYNEVMKTRIRDRSLAAGLNKSRLPEFTESEKRRINGTYDFFGFNHYTTVLAYNLNYATAISSFDADRGVASIADRSWPDSGSFWLKMTPFGFRRILNWLKEEYNDPPIYVTENGVSQREETDLNDTARIYYLRTYINEALKAVQDKVDLRGYTVWSAMDNFEWATGFSERFGLHFVNYSDPSLPRIPKASAKFYASVVRCNGFPDPATGPHACLHQPDAGPTISPVRQEEVQFLGLMLGTTEAQTALYVLFSLVLLGVCGLAFLSYKYCKRSKQGKTQRSQQELSPVSSF.

Positions 1–19 (MELSWHVVFIALLSFSCWG) are cleaved as a signal peptide. A propeptide spans 20–868 (SDWESDRNFI…NTVNLPSKVR (849 aa)) (XBetaGly). Over 20–1882 (SDWESDRNFI…LMLGTTEAQT (1863 aa)) the chain is Extracellular. N-linked (GlcNAc...) asparagine glycosylation occurs at Asn-42. The tract at residues 44–286 (SGLLGDQSSN…FIFNLKLPDC (243 aa)) is glycosyl hydrolase-1 1; Region I. Residues 362 to 855 (IWEAFANQSR…GFLTKGAKRL (494 aa)) form a glycosyl hydrolase-1 2; Region II region. Residues Asn-368, Asn-418, Asn-512, Asn-821, Asn-934, Asn-946, and Asn-989 are each glycosylated (N-linked (GlcNAc...) asparagine). Residues 902–1366 (TFRDDFLWGV…EVITNNGMPL (465 aa)) form a glycosyl hydrolase-1 3; Region III. Phlorizin hydrolase/glycosylceramidase activity region. The active-site Proton donor; for phlorizin hydrolase/Glycosylceramidase activity is Glu-1065. Asn-1174 carries an N-linked (GlcNAc...) asparagine glycan. The segment at 1220-1244 (RLNPPSYEDDQEMAEEEDPSWPSTA) is disordered. A compositionally biased stretch (acidic residues) spans 1226–1238 (YEDDQEMAEEEDP). Residue Glu-1273 is the Nucleophile; for phlorizin hydrolase/Glycosylceramidase activity of the active site. N-linked (GlcNAc...) asparagine glycosylation is found at Asn-1340 and Asn-1508. The segment at 1373–1846 (LYGRFPEGFI…CNGFPDPATG (474 aa)) is glycosyl hydrolase-1 4; Region IV. Lactase activity. Catalysis depends on Glu-1538, which acts as the Proton donor; for lactase activity. The required for homodimerization and transport to the plasma membrane stretch occupies residues 1647–1927 (RDRSLAAGLN…QQELSPVSSF (281 aa)). Residues Asn-1656 and Asn-1672 are each glycosylated (N-linked (GlcNAc...) asparagine). Glu-1749 functions as the Nucleophile; for lactase activity in the catalytic mechanism. N-linked (GlcNAc...) asparagine glycans are attached at residues Asn-1761 and Asn-1814. A helical transmembrane segment spans residues 1883–1901 (ALYVLFSLVLLGVCGLAFL). The Cytoplasmic portion of the chain corresponds to 1902 to 1927 (SYKYCKRSKQGKTQRSQQELSPVSSF).

The protein belongs to the glycosyl hydrolase 1 family. As to quaternary structure, homodimer. Post-translationally, N-glycosylated. In terms of tissue distribution, specifically expressed in small intestine.

Its subcellular location is the apical cell membrane. It catalyses the reaction lactose + H2O = beta-D-galactose + D-glucose. It carries out the reaction phlorizin + H2O = phloretin + beta-D-glucose. The catalysed reaction is D-cellobiose + H2O = beta-D-glucose + D-glucose. The enzyme catalyses quercetin 4'-O-beta-D-glucoside + H2O = quercetin + beta-D-glucose. It catalyses the reaction quercetin 3-O-beta-D-glucoside + H2O = quercetin + beta-D-glucose. It carries out the reaction kaempferol 3-O-beta-D-glucoside + H2O = kaempferol + beta-D-glucose. The catalysed reaction is luteolin 7-O-beta-D-glucoside + H2O = luteolin + beta-D-glucose. The enzyme catalyses luteolin 4'-O-beta-D-glucoside + H2O = luteolin + beta-D-glucose. It catalyses the reaction (2S)-naringenin 7-O-beta-D-glucoside + H2O = (2S)-naringenin + beta-D-glucose. It carries out the reaction eriodictyol-7-O-beta-D-glucoside + H2O = (S)-eriodictyol + beta-D-glucose. The catalysed reaction is apigenin 7-O-beta-D-glucoside + H2O = apigenin + beta-D-glucose. The enzyme catalyses daidzein 7-O-beta-D-glucoside + H2O = daidzein + beta-D-glucose + H(+). It catalyses the reaction genistein 7-O-beta-D-glucoside + H2O = genistein + beta-D-glucose. It carries out the reaction a beta-D-galactosyl-N-acylsphingosine + H2O = a ceramide + beta-D-galactose.. The catalysed reaction is beta-D-glucosyl-(1&lt;-&gt;1')-N-hexadecanoylsphing-4-enine + H2O = N-hexadecanoylsphing-4-enine + beta-D-glucose. The enzyme catalyses beta-D-galactosyl-(1&lt;-&gt;1')-N-hexadecanoylsphing-4-enine + H2O = beta-D-galactose + N-hexadecanoylsphing-4-enine. It catalyses the reaction beta-D-galactosyl-(1&lt;-&gt;1')-N-hexadecanoylsphinganine + H2O = N-hexadecanoylsphinganine + beta-D-galactose. It carries out the reaction beta-D-glucosyl-(1&lt;-&gt;1')-N-hexadecanoylsphinganine + H2O = N-hexadecanoylsphinganine + beta-D-glucose. Functionally, broad specificity glycosidase of the intestinal brush border membrane that hydrolyzes lactose, the main sugar in mammalian milk, to produce D-glucose and D-galactose. The mature protein is composed of two domains that catalyze the hydrolysis of beta-glucopyranosides and beta-galactopyranosides, with a preference for hydrophilic aglycones (in lactose and cellobiose) for one domain and hydrophobic aglycones (in phlorizin and glycosylceramides) for the other. The protein is Lactase/phlorizin hydrolase of Homo sapiens (Human).